A 264-amino-acid chain; its full sequence is uncharacterized protein (264 aa).

Residues 235–264 (ESSDEEDNDDDIINNDTNNDINNDDIEIKT) form a disordered region. Acidic residues predominate over residues 237-247 (SDEEDNDDDII).

This is an uncharacterized protein from Acanthamoeba polyphaga mimivirus (APMV).